Reading from the N-terminus, the 906-residue chain is Serine-aspartate repeat-containing protein C (906 aa).

An N-terminal signal peptide occupies residues 1–50 (MNNKKTATNRKGMIPNRLNKFSIRKYSVGTASILVGTTLIFGLSGHEAKA). Positions 51-127 (AEHTNGELNQ…QPTKKNNDAT (77 aa)) are disordered. Positions 51–486 (AEHTNGELNQ…GSSTANGDQK (436 aa)) are ligand binding A region. 2 stretches are compositionally biased toward polar residues: residues 56–71 (GELN…PSEN) and 80–119 (RQQN…STQP). CNA-B domains lie at 487–597 (KYNL…YKTP) and 598–708 (KYSL…EEET). Residues 669–881 (KQTGTNTTED…TGSENNGSNN (213 aa)) form a disordered region. Acidic residues-rich tracts occupy residues 676–686 (TEDDKDADGGE) and 703–845 (YFEE…DSDS). The short motif at 869–873 (LPETG) is the LPXTG sorting signal element. Residue T872 is modified to Pentaglycyl murein peptidoglycan amidated threonine. Positions 873-906 (GSENNGSNNATLFGGLFAALGSLLLFGRRKKQNK) are cleaved as a propeptide — removed by sortase.

Belongs to the serine-aspartate repeat-containing protein (SDr) family. In terms of assembly, homodimerizes; via N2-Domain. Interacts with host NRXN1; this interaction mediates bacterial attachment to host cells.

Its subcellular location is the secreted. The protein resides in the cell wall. Cell surface-associated calcium-binding protein which plays an important role in adhesion and pathogenesis. Mediates interactions with components of the extracellular matrix such as host NRXN1 to promote bacterial adhesion. This is Serine-aspartate repeat-containing protein C (sdrC) from Staphylococcus aureus (strain MRSA252).